A 123-amino-acid polypeptide reads, in one-letter code: Probable cyclase otaY (123 aa).

The protein belongs to the aurE cyclase family.

It functions in the pathway mycotoxin biosynthesis. Functionally, probable cyclase; part of the gene cluster that mediates the biosynthesis of ochratoxin A (OTA), a mycotoxin composed of a chlorinated type I polyketide dihydroisocoumarin moiety linked to L-phenylalanine, and demonstrated to have nephrotoxic, immunotoxic, genotoxic, neurotoxic, and teratogenic properties. OtaY is probably involved in the polyketide cyclization. The pathway begins with the highly reducing polyketide synthase otaA that catalyzes the formation of the isocoumarin group during the initial stages of biosynthesis, starting from one acetate and 4 malonate units, to originate the characteristic pentaketide skeleton 7-methylmellein (7-MM) of the OTA molecule. The newly identified cyclase otaY might be involved in the polyketide cyclization reaction during the initial steps of the OTA biosynthesis. 7-MM is then oxidized into 7-carboxymellein (also called ochratoxin beta) by the cytochrome P450 monooxygenase otaC. The NRPS encoded by the otaB gene is involved in the linking of phenylalanine to the dihydroisocoumarin ring. The reaction catalyzed by NRPS results in the production of ochratoxin B (OTB), which is the non-chlorinated analog of OTA and which subsequently serves as the substrate of the halogenase otaD for chlorination activity to form the final molecular structure of OTA, containing a chlorine atom in the C-5 position of the molecule. The sequence is that of Probable cyclase otaY from Aspergillus carbonarius (strain ITEM 5010).